Reading from the N-terminus, the 513-residue chain is ATP synthase subunit alpha (513 aa).

169-176 (GDRQTGKT) lines the ATP pocket.

Belongs to the ATPase alpha/beta chains family. As to quaternary structure, F-type ATPases have 2 components, CF(1) - the catalytic core - and CF(0) - the membrane proton channel. CF(1) has five subunits: alpha(3), beta(3), gamma(1), delta(1), epsilon(1). CF(0) has three main subunits: a(1), b(2) and c(9-12). The alpha and beta chains form an alternating ring which encloses part of the gamma chain. CF(1) is attached to CF(0) by a central stalk formed by the gamma and epsilon chains, while a peripheral stalk is formed by the delta and b chains.

The protein localises to the cell inner membrane. The catalysed reaction is ATP + H2O + 4 H(+)(in) = ADP + phosphate + 5 H(+)(out). In terms of biological role, produces ATP from ADP in the presence of a proton gradient across the membrane. The alpha chain is a regulatory subunit. The sequence is that of ATP synthase subunit alpha from Tolumonas auensis (strain DSM 9187 / NBRC 110442 / TA 4).